A 132-amino-acid polypeptide reads, in one-letter code: Interleukin-13 (132 aa).

Residues 1–18 (MALLLTMVIALTCLGGFA) form the signal peptide. N-linked (GlcNAc...) asparagine glycans are attached at residues N38, N49, N57, and N72. Disulfide bonds link C48/C76 and C64/C90.

This sequence belongs to the IL-4/IL-13 family. As to quaternary structure, interacts with IL13RA2.

Its subcellular location is the secreted. In terms of biological role, cytokine that plays important roles in allergic inflammation and immune response to parasite infection. Synergizes with IL2 in regulating interferon-gamma synthesis. Stimulates B-cell proliferation, and activation of eosinophils, basophils, and mast cells. Plays an important role in controlling IL33 activity by modulating the production of transmembrane and soluble forms of interleukin-1 receptor-like 1/IL1RL1. Displays the capacity to antagonize Th1-driven proinflammatory immune response and downregulates synthesis of many proinflammatory cytokines including IL1, IL6, IL10, IL12 and TNF-alpha through a mechanism that partially involves suppression of NF-kappa-B. Also functions on nonhematopoietic cells, including endothelial cells where it induces vascular cell adhesion protein 1/VCAM1, which is important in the recruitment of eosinophils. Exerts its biological effects through its receptors which comprises the IL4R chain and the IL13RA1 chain, to activate JAK1 and TYK2, leading to the activation of STAT6. Aside from IL13RA1, another receptor IL13RA2 acts as a high affinity decoy for IL13 and mediates internalization and depletion of extracellular IL13. This Macaca thibetana (Pere David's macaque) protein is Interleukin-13 (IL13).